The sequence spans 979 residues: Glucose transport transcription regulator RGT1 (979 aa).

3 stretches are compositionally biased toward basic and acidic residues: residues 1-14 (MSAS…KEAE), 36-47 (DQCREKKTRCDF), and 105-114 (FKGDAGRPRA). Disordered regions lie at residues 1–47 (MSAS…RCDF), 65–142 (TFER…LAPG), 165–219 (IDSL…EDCR), 249–380 (LPQQ…SIES), 563–590 (DTEA…GKSA), and 926–954 (APES…NTSL). The segment at residues 35–64 (CDQCREKKTRCDFSDERPICSACQRMGKTC) is a DNA-binding region (zn(2)-C6 fungal-type). Positions 132 to 142 (QPRLQPLLAPG) are enriched in low complexity. Composition is skewed to polar residues over residues 170–179 (SDVSNRNGSE) and 186–207 (SNAS…SQLP). Low complexity predominate over residues 251–263 (QQQQQQQQQNAQQ). Residues 280 to 295 (EHFKEFDEGFHSRKGS) are compositionally biased toward basic and acidic residues. Residues 296 to 309 (DVSVAVSPSSPVQV) show a composition bias toward low complexity. Positions 310 to 329 (TRTQQAGLNSESRDTNTATA) are enriched in polar residues. Over residues 358 to 368 (GPRKQKRKNSN) the composition is skewed to basic residues. A compositionally biased stretch (low complexity) spans 369-380 (RNKPGSQSSIES). A compositionally biased stretch (acidic residues) spans 565 to 574 (EASENEDEAG). Residues 942 to 953 (PGPNSDGSNNTS) are compositionally biased toward low complexity.

This sequence belongs to the EDS1/RGT1 family.

The protein resides in the nucleus. It localises to the cytoplasm. Glucose-responsive transcription factor that regulates expression of several glucose transporter (HXT) genes in response to glucose. In the absence of glucose, it functions as a transcriptional repressor, whereas high concentrations of glucose cause it to function as a transcriptional activator. In cells growing on low levels of glucose, has a neutral role, neither repressing nor activating transcription. The protein is Glucose transport transcription regulator RGT1 (RGT1) of Lachancea thermotolerans (strain ATCC 56472 / CBS 6340 / NRRL Y-8284) (Yeast).